The sequence spans 366 residues: tRNA/tmRNA (uracil-C(5))-methyltransferase (366 aa).

5 residues coordinate S-adenosyl-L-methionine: Gln-190, Tyr-218, Asn-223, Glu-239, and Asp-299. Residue Cys-324 is the Nucleophile of the active site. The Proton acceptor role is filled by Glu-358.

The protein belongs to the class I-like SAM-binding methyltransferase superfamily. RNA M5U methyltransferase family. TrmA subfamily.

The enzyme catalyses uridine(54) in tRNA + S-adenosyl-L-methionine = 5-methyluridine(54) in tRNA + S-adenosyl-L-homocysteine + H(+). The catalysed reaction is uridine(341) in tmRNA + S-adenosyl-L-methionine = 5-methyluridine(341) in tmRNA + S-adenosyl-L-homocysteine + H(+). Functionally, dual-specificity methyltransferase that catalyzes the formation of 5-methyluridine at position 54 (m5U54) in all tRNAs, and that of position 341 (m5U341) in tmRNA (transfer-mRNA). This chain is tRNA/tmRNA (uracil-C(5))-methyltransferase, found in Salmonella typhi.